An 860-amino-acid polypeptide reads, in one-letter code: Alanine--tRNA ligase (860 aa).

4 residues coordinate Zn(2+): histidine 563, histidine 567, cysteine 665, and histidine 669. The interval 824 to 843 (VGGKGGGRPDMAQAGGTDSS) is disordered.

The protein belongs to the class-II aminoacyl-tRNA synthetase family. Zn(2+) serves as cofactor.

The protein localises to the cytoplasm. It catalyses the reaction tRNA(Ala) + L-alanine + ATP = L-alanyl-tRNA(Ala) + AMP + diphosphate. Functionally, catalyzes the attachment of alanine to tRNA(Ala) in a two-step reaction: alanine is first activated by ATP to form Ala-AMP and then transferred to the acceptor end of tRNA(Ala). Also edits incorrectly charged Ser-tRNA(Ala) and Gly-tRNA(Ala) via its editing domain. This Vibrio vulnificus (strain YJ016) protein is Alanine--tRNA ligase.